The chain runs to 444 residues: Methylenetetrahydrofolate--tRNA-(uracil-5-)-methyltransferase TrmFO (444 aa).

Position 10-15 (10-15) interacts with FAD; that stretch reads GAGLAG.

The protein belongs to the MnmG family. TrmFO subfamily. FAD is required as a cofactor.

It is found in the cytoplasm. The catalysed reaction is uridine(54) in tRNA + (6R)-5,10-methylene-5,6,7,8-tetrahydrofolate + NADH + H(+) = 5-methyluridine(54) in tRNA + (6S)-5,6,7,8-tetrahydrofolate + NAD(+). It catalyses the reaction uridine(54) in tRNA + (6R)-5,10-methylene-5,6,7,8-tetrahydrofolate + NADPH + H(+) = 5-methyluridine(54) in tRNA + (6S)-5,6,7,8-tetrahydrofolate + NADP(+). Catalyzes the folate-dependent formation of 5-methyl-uridine at position 54 (M-5-U54) in all tRNAs. The chain is Methylenetetrahydrofolate--tRNA-(uracil-5-)-methyltransferase TrmFO from Streptococcus sanguinis (strain SK36).